We begin with the raw amino-acid sequence, 882 residues long: DNA mismatch repair protein MutS (882 aa).

656–663 (GPNASGKS) is an ATP binding site.

This sequence belongs to the DNA mismatch repair MutS family.

Functionally, this protein is involved in the repair of mismatches in DNA. It is possible that it carries out the mismatch recognition step. This protein has a weak ATPase activity. The chain is DNA mismatch repair protein MutS from Synechococcus elongatus (strain ATCC 33912 / PCC 7942 / FACHB-805) (Anacystis nidulans R2).